We begin with the raw amino-acid sequence, 237 residues long: Uracil-DNA glycosylase (237 aa).

Residue aspartate 77 is the Proton acceptor of the active site.

The protein belongs to the uracil-DNA glycosylase (UDG) superfamily. UNG family.

It localises to the cytoplasm. It catalyses the reaction Hydrolyzes single-stranded DNA or mismatched double-stranded DNA and polynucleotides, releasing free uracil.. Functionally, excises uracil residues from the DNA which can arise as a result of misincorporation of dUMP residues by DNA polymerase or due to deamination of cytosine. The protein is Uracil-DNA glycosylase of Acinetobacter baumannii (strain SDF).